Reading from the N-terminus, the 904-residue chain is uncharacterized protein (904 aa).

Disordered stretches follow at residues 247 to 275 (KIGK…SLEF) and 328 to 360 (GDSQ…HHFS). Residues 342-360 (GAQTLSPTSHPSSANHHFS) are compositionally biased toward polar residues. The helical transmembrane segment at 778–798 (VVQGMILMFAGGKLIFGGRVL) threads the bilayer.

The protein localises to the membrane. This is an uncharacterized protein from Homo sapiens (Human).